The primary structure comprises 149 residues: MADSLTEEQVSEFKEAFSLFDKDGDGQITTKELGTVMRSLGQNPSESELQDMINEVDADNNGTIDFPEFLTMMARKMKDTDSEEEIREAFKVFDRDNNGFISAAELRHVMTSIGEKLTDDEVDEMIREADQDGDGRIDYNEFVQLMMQK.

The residue at position 2 (Ala2) is an N-acetylalanine. 4 EF-hand domains span residues 8-43 (EQVSEFKEAFSLFDKDGDGQITTKELGTVMRSLGQN), 44-79 (PSESELQDMINEVDADNNGTIDFPEFLTMMARKMKD), 81-116 (DSEEEIREAFKVFDRDNNGFISAAELRHVMTSIGEK), and 117-149 (LTDDEVDEMIREADQDGDGRIDYNEFVQLMMQK). Ca(2+) is bound by residues Asp21, Asp23, Asp25, Gln27, Glu32, Asp57, Asp59, Asn61, Thr63, Glu68, Asp94, Asp96, Asn98, Glu105, Asp130, Asp132, Asp134, Arg136, and Glu141.

This sequence belongs to the calmodulin family.

In terms of biological role, calmodulin mediates the control of a large number of enzymes, ion channels and other proteins by Ca(2+). Among the enzymes to be stimulated by the calmodulin-Ca(2+) complex are a number of protein kinases and phosphatases. The sequence is that of Calmodulin from Colletotrichum gloeosporioides (Anthracnose fungus).